The primary structure comprises 595 residues: Anthranilate synthase alpha subunit 1, chloroplastic (595 aa).

The transit peptide at 1–54 (MSSSMNVATMQALTFSRRLLPSVASRYLSSSSVTVTGYSGRSSAYAPSFRSIKC) directs the protein to the chloroplast. An N-acetylvaline modification is found at Val55. L-tryptophan is bound by residues Ser115 and 356 to 358 (PYM). Chorismate is bound at residue 391-392 (GT). Position 418 (Glu418) interacts with Mg(2+). Chorismate is bound by residues Tyr506, Arg526, 558-560 (GAG), and Gly560. Residue Glu573 participates in Mg(2+) binding.

Belongs to the anthranilate synthase component I family. In terms of assembly, heterotetramer consisting of two non-identical subunits: a beta subunit and a large alpha subunit. The cofactor is Mg(2+). Expressed in the central cylinder of mature primary root zones, including pericycle and early lateral root primordia, and vasculature of cotyledons.

The protein resides in the plastid. It localises to the chloroplast. The catalysed reaction is chorismate + L-glutamine = anthranilate + pyruvate + L-glutamate + H(+). It functions in the pathway amino-acid biosynthesis; L-tryptophan biosynthesis; L-tryptophan from chorismate: step 1/5. With respect to regulation, feedback inhibition by tryptophan. In terms of biological role, part of a heterotetrameric complex that catalyzes the two-step biosynthesis of anthranilate, an intermediate in the biosynthesis of L-tryptophan. In the first step, the glutamine-binding beta subunit of anthranilate synthase (AS) provides the glutamine amidotransferase activity which generates ammonia as a substrate that, along with chorismate, is used in the second step, catalyzed by the large alpha subunit of AS to produce anthranilate. Plays an important regulatory role in auxin production via the tryptophan-dependent biosynthetic pathway. This chain is Anthranilate synthase alpha subunit 1, chloroplastic (ASA1), found in Arabidopsis thaliana (Mouse-ear cress).